The sequence spans 406 residues: COP9 signalosome complex subunit 4 (406 aa).

Alanine 2 is modified (N-acetylalanine). The residue at position 25 (lysine 25) is an N6-acetyllysine. A PCI domain is found at tyrosine 197–alanine 366.

It belongs to the CSN4 family. As to quaternary structure, component of the CSN complex, composed of COPS1/GPS1, COPS2, COPS3, COPS4, COPS5, COPS6, COPS7 (COPS7A or COPS7B), COPS8 and COPS9 isoform 1. In the complex, it probably interacts directly with COPS1, COPS2, COPS3, COPS5, COPS6, COPS7 (COPS7A or COPS7B) and COPS8. Interacts with TOR1A; the interaction is direct and associates TOR1A and SNAPIN with the CSN complex. Interacts with STON2; controls STON2 neddylation levels. Interacts with ERCC6.

It localises to the cytoplasm. The protein resides in the nucleus. Its subcellular location is the cytoplasmic vesicle. It is found in the secretory vesicle. The protein localises to the synaptic vesicle. In terms of biological role, component of the COP9 signalosome complex (CSN), a complex involved in various cellular and developmental processes. The CSN complex is an essential regulator of the ubiquitin (Ubl) conjugation pathway by mediating the deneddylation of the cullin subunits of SCF-type E3 ligase complexes, leading to decrease the Ubl ligase activity of SCF-type complexes such as SCF, CSA or DDB2. Also involved in the deneddylation of non-cullin subunits such as STON2. The complex is also involved in phosphorylation of p53/TP53, c-jun/JUN, IkappaBalpha/NFKBIA, ITPK1, IRF8/ICSBP and SNAPIN, possibly via its association with CK2 and PKD kinases. CSN-dependent phosphorylation of TP53 and JUN promotes and protects degradation by the Ubl system, respectively. This Homo sapiens (Human) protein is COP9 signalosome complex subunit 4 (COPS4).